Here is a 282-residue protein sequence, read N- to C-terminus: ATP synthase gamma chain (282 aa).

Belongs to the ATPase gamma chain family. As to quaternary structure, F-type ATPases have 2 components, CF(1) - the catalytic core - and CF(0) - the membrane proton channel. CF(1) has five subunits: alpha(3), beta(3), gamma(1), delta(1), epsilon(1). CF(0) has three main subunits: a, b and c.

It is found in the cell inner membrane. Its function is as follows. Produces ATP from ADP in the presence of a proton gradient across the membrane. The gamma chain is believed to be important in regulating ATPase activity and the flow of protons through the CF(0) complex. The chain is ATP synthase gamma chain from Fusobacterium nucleatum subsp. nucleatum (strain ATCC 25586 / DSM 15643 / BCRC 10681 / CIP 101130 / JCM 8532 / KCTC 2640 / LMG 13131 / VPI 4355).